Consider the following 367-residue polypeptide: Succinyl-diaminopimelate desuccinylase (367 aa).

Zn(2+) is bound at residue His-67. Asp-69 is an active-site residue. Asp-98 contributes to the Zn(2+) binding site. Glu-128 functions as the Proton acceptor in the catalytic mechanism. Zn(2+) contacts are provided by Glu-129, Glu-157, and His-342.

The protein belongs to the peptidase M20A family. DapE subfamily. Homodimer. Zn(2+) serves as cofactor. It depends on Co(2+) as a cofactor.

It carries out the reaction N-succinyl-(2S,6S)-2,6-diaminopimelate + H2O = (2S,6S)-2,6-diaminopimelate + succinate. The protein operates within amino-acid biosynthesis; L-lysine biosynthesis via DAP pathway; LL-2,6-diaminopimelate from (S)-tetrahydrodipicolinate (succinylase route): step 3/3. Its function is as follows. Catalyzes the hydrolysis of N-succinyl-L,L-diaminopimelic acid (SDAP), forming succinate and LL-2,6-diaminopimelate (DAP), an intermediate involved in the bacterial biosynthesis of lysine and meso-diaminopimelic acid, an essential component of bacterial cell walls. The polypeptide is Succinyl-diaminopimelate desuccinylase (Campylobacter hominis (strain ATCC BAA-381 / DSM 21671 / CCUG 45161 / LMG 19568 / NCTC 13146 / CH001A)).